The following is a 917-amino-acid chain: Isoleucine--tRNA ligase (917 aa).

Residues 57–67 (PYANGNLHMGH) carry the 'HIGH' region motif. Glu-554 lines the L-isoleucyl-5'-AMP pocket. The short motif at 595 to 599 (KMSKS) is the 'KMSKS' region element. Residue Lys-598 participates in ATP binding. Zn(2+)-binding residues include Cys-886, Cys-889, Cys-906, and Cys-909.

The protein belongs to the class-I aminoacyl-tRNA synthetase family. IleS type 1 subfamily. Monomer. The cofactor is Zn(2+).

It localises to the cytoplasm. The enzyme catalyses tRNA(Ile) + L-isoleucine + ATP = L-isoleucyl-tRNA(Ile) + AMP + diphosphate. In terms of biological role, catalyzes the attachment of isoleucine to tRNA(Ile). As IleRS can inadvertently accommodate and process structurally similar amino acids such as valine, to avoid such errors it has two additional distinct tRNA(Ile)-dependent editing activities. One activity is designated as 'pretransfer' editing and involves the hydrolysis of activated Val-AMP. The other activity is designated 'posttransfer' editing and involves deacylation of mischarged Val-tRNA(Ile). The protein is Isoleucine--tRNA ligase (ileS) of Staphylococcus aureus (strain MSSA476).